A 222-amino-acid polypeptide reads, in one-letter code: Phosphatidylinositol phosphate synthase (222 aa).

Aspartate 31–threonine 34 lines the a CDP-1,2-diacyl-sn-glycerol pocket. 2 helical membrane passes run isoleucine 32–phenylalanine 49 and tryptophan 55–methionine 74. Residues aspartate 68 and aspartate 71 each coordinate Mg(2+). 3 residues coordinate a CDP-1,2-diacyl-sn-glycerol: glycine 72, arginine 76, and threonine 82. Mg(2+) contacts are provided by aspartate 89 and aspartate 93. Aspartate 93 serves as the catalytic Proton acceptor. 4 consecutive transmembrane segments (helical) span residues leucine 95–leucine 112, valine 118–alanine 136, leucine 156–leucine 173, and valine 179–valine 196.

This sequence belongs to the CDP-alcohol phosphatidyltransferase class-I family. In terms of assembly, homodimer. Mg(2+) serves as cofactor.

The protein localises to the cell membrane. It localises to the secreted. It is found in the cell wall. The catalysed reaction is a CDP-1,2-diacyl-sn-glycerol + 1D-myo-inositol 3-phosphate = a 1,2-diacyl-sn-glycero-3-phospho-(1D-myo-inositol-3-phosphate) + CMP + H(+). It carries out the reaction 1,2-di-(9Z-octadecenoyl)-sn-glycero-3-cytidine-5'-diphosphate + 1D-myo-inositol 3-phosphate = 1,2-di-(9Z-octadecenoyl)-sn-glycero-3-phospho-(1D-myo-inositol-3-phosphate) + CMP + H(+). The enzyme catalyses 1,2-dihexadecanoyl-sn-glycero-3-CDP + 1D-myo-inositol 3-phosphate = 1,2-dihexadecanoyl-sn-glycero-3-phospho-(1D-myo-inositol-3-phosphate) + CMP + H(+). It participates in phospholipid metabolism; phosphatidylinositol phosphate biosynthesis. Its activity is regulated as follows. Competitively inhibited by several inositol 1-phosphate analogs, including the phosphonate analog 1-deoxy-1-phosphonomethyl-myo-inositol (Ino-C-P). This leads to inhibition of M.smegmatis growth. Its function is as follows. Catalyzes the conjugation of the 1'-hydroxyl group of D-myo-inositol-3-phosphate (also named L-myo-inositol-1-phosphate) with a lipid tail of cytidine diphosphate diacylglycerol (CDP-DAG), forming phosphatidylinositol phosphate (PIP) and CMP. PIP is a precursor of phosphatidylinositol (PI) which is an essential lipid for mycobacteria required for formation of their cell wall. Is essential to the survival of M.smegmatis. In Mycolicibacterium smegmatis (strain ATCC 700084 / mc(2)155) (Mycobacterium smegmatis), this protein is Phosphatidylinositol phosphate synthase.